The primary structure comprises 239 residues: MEAEVQQGQQSPEGQLEKRPPSPPWAGIPLQRGLGHRVRQHVNPLQAQYQQPAPPPHWERVYRRLGQPFHLDIGTGSGRFLLRIAQEQPDWNFLGVEIRQALVERANAWRDELGLDNVHFLFANINVSLRHLFAPGDLSRVTILFPDPWFKKRHHKRRIVQPQLVADLALLLRPGSPVFLQSDIQEVAEEMAARFLEHPQFWDPHQGPLDSNPLGIPTEREWQCLQLDLPIYRYWLERR.

Over residues 1 to 13 the composition is skewed to polar residues; it reads MEAEVQQGQQSPE. A disordered region spans residues 1 to 30; the sequence is MEAEVQQGQQSPEGQLEKRPPSPPWAGIPL. The S-adenosyl-L-methionine site is built by Asp72, Glu97, Asn124, and Asp147. Asp147 is an active-site residue. Substrate is bound by residues Lys151 and Asp183.

The protein belongs to the class I-like SAM-binding methyltransferase superfamily. TrmB family.

The enzyme catalyses guanosine(46) in tRNA + S-adenosyl-L-methionine = N(7)-methylguanosine(46) in tRNA + S-adenosyl-L-homocysteine. It functions in the pathway tRNA modification; N(7)-methylguanine-tRNA biosynthesis. In terms of biological role, catalyzes the formation of N(7)-methylguanine at position 46 (m7G46) in tRNA. The protein is tRNA (guanine-N(7)-)-methyltransferase of Synechococcus sp. (strain JA-2-3B'a(2-13)) (Cyanobacteria bacterium Yellowstone B-Prime).